The following is a 334-amino-acid chain: Non-functional pseudokinase ZED1 (334 aa).

One can recognise a Protein kinase domain in the interval Phe49–Ser334. ATP contacts are provided by residues Ile55 to Trp63 and Lys76. O-acetylthreonine is present on residues Thr125 and Thr177.

The protein belongs to the protein kinase superfamily. Ser/Thr protein kinase family. ZRK subfamily. Interacts with RPP13L4/ZAR1. Component of an immune signaling complex made of, at least, SZE1, BKN2/SZE2, ZAR1 and ZED1. Binds directly to SZE1 at the plasma membrane. As to expression, expressed in seedlings, young leaves, floral organs, shoot apical meristems (SAM) and inflorescence stems.

It is found in the cytoplasm. Its subcellular location is the cytosol. The protein resides in the nucleus. It localises to the cell membrane. In terms of biological role, together with RPP13L4/ZAR1, involved in the ambient temperature (above 22 degrees Celsius)-sensitive aerial organ development. Together with RPP13L4/ZAR1, involved in the regulation of the ambient temperature-sensitive intersection of growth and immune response in the absence of pathogens, by repressing the transcription of SNC1. Probable non-functional kinase required for recognition of the Pseudomonas syringae type III effector HopZ1a by RPP13L4/ZAR1 and, together with SZE1 and SZE2, to trigger subsequent defense responses. May function as a decoy to trap HopZ1a in the ZAR1 complex for recognition by the plant immune system. The sequence is that of Non-functional pseudokinase ZED1 from Arabidopsis thaliana (Mouse-ear cress).